Consider the following 853-residue polypeptide: MLSLGKNGKTSSTLVRNARRSVIMPASRDVRSRKRRARSVTDTKDVLDLDSIDFTNEKEVQFKVNQLKEFTRNLREQIKYTDELKRKHVIEEEETKSVDPEMHDFDSDAGVILSSLNDKVAGPGAEQNLSTLLLSDKADTSLLPERLSERIKDKDLILRCLFDKRNRDFNPIVTELYHSEQRLKGLGIQFIYSKILSKFDKLSFTSLSQLDEMIMESVGNDSSRLNGNLYEHLMLSFSRVTSPSAQGKLEVCGKLRELTERMDATLSKKSFQPTQYMLNACIFAASKAMSWEYMDFFLKKFTSTYDMQPNRKNYTTVISFYTKMEHYKKAWQLFDSLKFLSLEHKPDTKVYNLMLEVCQKEKNYARSLDIFQEMDDLNVTKDLKTYLNAAKSLALSSADNVTSEGKADSLRLMSWKYIHKIHDDPKLSKQLTENPRNNMLLLETMMVLSAYDGDVGFARALYYKYTNALFKAHFYEFKKYHKDTDPVDYIRIWKKSLSAQMFNWLMLSYSKFKKSRLPVLLGYPEGSSLRRSMIYSVDYSGRDSSYENSNIQLPMLPMTELNDAELTINESKALWRFNLEFGGNYDIRELPEGMQTVKDIENIVKCAKTVNEFKLQISQRLLEWKNRYVNHKILNMKSLITFLTIPIRLHEPNEFKLRLQEFTFQAFEFNERVEYQFKKSKTNELESPVLSKDFNTTDSNALVDNGIIPSEFLLYLVSMKHKLATNCAIYEVSMKAAIAFHDYELAMTTWKNRGKFRMTDAFQKLTPGERQQSDATFAQLMVEYFTNEKMYQDALSIILSSLKTVNWQYSMVKSLHRALLAIEDENSAARLLSVVNRKSKIVELEEEIKSLDL.

The transit peptide at 1–25 (MLSLGKNGKTSSTLVRNARRSVIMP) directs the protein to the mitochondrion. PPR repeat units follow at residues 310 to 344 (NRKN…SLEH) and 347 to 381 (DTKV…NVTK).

Belongs to the CCM1 family. Binds to mitochondrial small subunit 15S rRNA.

The protein resides in the mitochondrion. In terms of biological role, regulates mitochondrial small subunit maturation by controlling 15S rRNA 5'-end processing. Localizes to the 5' precursor of the 15S rRNA in a position that is subsequently occupied by mS47 in the mature yeast mtSSU. Uses structure and sequence-specific RNA recognition, binding to a single-stranded region of the precursor and specifically recognizing bases -6 to -1. The exchange of Ccm1 for mS47 is coupled to the irreversible removal of precursor rRNA that is accompanied by conformational changes of the mitoribosomal proteins uS5m and mS26. These conformational changes signal completion of 5'-end rRNA processing through protection of the mature 5'-end of the 15S rRNA and stabilization of mS47. The removal of the 5' precursor together with the dissociation of Ccm1 may be catalyzed by the 5'-3' exoribonuclease Pet127. Involved in the specific removal of group I introns in mitochondrial encoded transcripts. This Kluyveromyces lactis (strain ATCC 8585 / CBS 2359 / DSM 70799 / NBRC 1267 / NRRL Y-1140 / WM37) (Yeast) protein is Mitochondrial 15S rRNA processing factor CCM1 (CCM1).